Reading from the N-terminus, the 839-residue chain is Homeobox-leucine zipper protein HOX10 (839 aa).

Disordered regions lie at residues 1–24 and 132–157; these read MAAA…SGMD and QNTP…RDAS. Positions 24 to 87 form a DNA-binding region, homeobox; it reads DSGKYVRYTP…NRRCRDKQRK (64 aa). Residues 91–134 adopt a coiled-coil conformation; it reads RLQAVNRKLTAMNKLLMEENERLQKQVSQLVHENAHMRQQLQNT. An START domain is found at 155 to 383; that stretch reads DASNPSGLLS…IAQETSGEVV (229 aa).

The protein belongs to the HD-ZIP homeobox family. Class III subfamily. In terms of tissue distribution, expressed in stems, leaf sheaths and blades and panicles.

The protein localises to the nucleus. Its function is as follows. Probable transcription factor. This Oryza sativa subsp. indica (Rice) protein is Homeobox-leucine zipper protein HOX10 (HOX10).